The primary structure comprises 127 residues: Probable 4-amino-4-deoxy-L-arabinose-phosphoundecaprenol flippase subunit ArnF (127 aa).

Residues 1-21 traverse the membrane as a helical segment; that stretch reads MMGYFWALMSVLLVSGAQLMM. Residues 22–48 lie on the Periplasmic side of the membrane; sequence KWAMVSLPPVGQTDALMSAFMSVTPGA. Residues 49-69 traverse the membrane as a helical segment; sequence VALVIGLFAYVFSMGCWYMAL. At 70–77 the chain is on the cytoplasmic side; that stretch reads RRIALSKA. A helical membrane pass occupies residues 78–98; the sequence is YPLLSLSYVLVWAAAIGLPWL. The Periplasmic segment spans residues 99-101; sequence HEP. Residues 102 to 122 form a helical membrane-spanning segment; it reads FSVGKLAGVSVIFVGLLLVCL. The Cytoplasmic segment spans residues 123–127; that stretch reads PDKKS.

It belongs to the ArnF family. In terms of assembly, heterodimer of ArnE and ArnF.

Its subcellular location is the cell inner membrane. The protein operates within bacterial outer membrane biogenesis; lipopolysaccharide biosynthesis. In terms of biological role, translocates 4-amino-4-deoxy-L-arabinose-phosphoundecaprenol (alpha-L-Ara4N-phosphoundecaprenol) from the cytoplasmic to the periplasmic side of the inner membrane. This Enterobacter sp. (strain 638) protein is Probable 4-amino-4-deoxy-L-arabinose-phosphoundecaprenol flippase subunit ArnF.